The chain runs to 1308 residues: Transposon TX1 uncharacterized 149 kDa protein (1308 aa).

Residues 494–765 (EAFKKGELPL…KIIKYLGVYL (272 aa)) enclose the Reverse transcriptase domain.

The chain is Transposon TX1 uncharacterized 149 kDa protein from Xenopus laevis (African clawed frog).